Consider the following 276-residue polypeptide: uncharacterized protein (276 aa).

The next 7 helical transmembrane spans lie at 5–25, 32–52, 64–84, 104–124, 149–169, 193–213, and 244–264; these read TDLI…GMLA, PLVG…GFVG, GVIL…LLAV, AGLA…GLAL, IAVG…VLLP, LWVT…VMLV, and VGIA…GAFF.

It belongs to the monovalent cation:proton antiporter 2 (CPA2) transporter (TC 2.A.37) family.

Its subcellular location is the cell membrane. This is an uncharacterized protein from Methylorubrum extorquens (Methylobacterium dichloromethanicum).